The primary structure comprises 43 residues: Potassium channel toxin gamma-KTx 3.3 (43 aa).

4 disulfides stabilise this stretch: Cys5–Cys23, Cys11–Cys34, Cys20–Cys39, and Cys24–Cys41.

This sequence belongs to the ergtoxin family. Gamma-KTx 3 subfamily. In terms of tissue distribution, expressed by the venom gland.

Its subcellular location is the secreted. Its function is as follows. Blocks Kv11/ERG potassium channels. The polypeptide is Potassium channel toxin gamma-KTx 3.3 (Centruroides sculpturatus (Arizona bark scorpion)).